A 496-amino-acid polypeptide reads, in one-letter code: Glycerol kinase (496 aa).

Residue threonine 12 participates in ADP binding. The ATP site is built by threonine 12, threonine 13, and serine 14. Position 12 (threonine 12) interacts with sn-glycerol 3-phosphate. Arginine 16 lines the ADP pocket. Sn-glycerol 3-phosphate contacts are provided by arginine 82, glutamate 83, and tyrosine 134. Positions 82, 83, and 134 each coordinate glycerol. Histidine 230 carries the phosphohistidine; by HPr modification. Aspartate 244 lines the sn-glycerol 3-phosphate pocket. The glycerol site is built by aspartate 244 and glutamine 245. Threonine 266 and glycine 309 together coordinate ADP. The ATP site is built by threonine 266, glycine 309, glutamine 313, and glycine 410. ADP-binding residues include glycine 410 and asparagine 414.

It belongs to the FGGY kinase family. In terms of processing, the phosphoenolpyruvate-dependent sugar phosphotransferase system (PTS), including enzyme I, and histidine-containing protein (HPr) are required for the phosphorylation of, which leads to the activation of the enzyme.

It catalyses the reaction glycerol + ATP = sn-glycerol 3-phosphate + ADP + H(+). The protein operates within polyol metabolism; glycerol degradation via glycerol kinase pathway; sn-glycerol 3-phosphate from glycerol: step 1/1. Inhibited by fructose 1,6-bisphosphate and p-chloromercuribenzoate (PCMB). Key enzyme in the regulation of glycerol uptake and metabolism. Catalyzes the phosphorylation of glycerol to yield sn-glycerol 3-phosphate. The sequence is that of Glycerol kinase from Thermus thermophilus.